The primary structure comprises 247 residues: NADH dehydrogenase [ubiquinone] flavoprotein 2, mitochondrial (247 aa).

The transit peptide at 1–40 (MFRSLLKRTTFLNQLNKSNGFNRNYFKQSTLTRSDALSRH) directs the protein to the mitochondrion. The [2Fe-2S] cluster site is built by C135, C140, C176, and C180. Residues 211 to 247 (NKPTKIGPQTHRKAAEGPQGKTTLLEPPVGPTCRDDL) are disordered.

It belongs to the complex I 24 kDa subunit family. In terms of assembly, complex I is composed of 45 different subunits. This is a component of the flavoprotein-sulfur (FP) fragment of the enzyme. [2Fe-2S] cluster serves as cofactor.

The protein localises to the mitochondrion inner membrane. The enzyme catalyses a ubiquinone + NADH + 5 H(+)(in) = a ubiquinol + NAD(+) + 4 H(+)(out). In terms of biological role, core subunit of the mitochondrial membrane respiratory chain NADH dehydrogenase (Complex I) that is believed to belong to the minimal assembly required for catalysis. Complex I functions in the transfer of electrons from NADH to the respiratory chain. The immediate electron acceptor for the enzyme is believed to be ubiquinone. The protein is NADH dehydrogenase [ubiquinone] flavoprotein 2, mitochondrial (ndufv2) of Dictyostelium discoideum (Social amoeba).